The sequence spans 1264 residues: Valine--tRNA ligase (1264 aa).

At S2 the chain carries N-acetylserine. The GST C-terminal domain maps to 89–219 (GSRAAVLVQQ…YSGARPLSHQ (131 aa)). A disordered region spans residues 217–296 (SHQPGPEAPA…GEKKDVSGPM (80 aa)). Composition is skewed to basic and acidic residues over residues 234–248 (LKKE…EKFQ) and 261–275 (GEKK…KRDP). A 'HIGH' region motif is present at residues 344–354 (PNVTGSLHLGH). Residues S437 and S527 each carry the phosphoserine modification. K645 is modified (N6-acetyllysine). Positions 862-866 (KMSKS) match the 'KMSKS' region motif. An ATP-binding site is contributed by K865.

It belongs to the class-I aminoacyl-tRNA synthetase family. In terms of assembly, forms high-molecular-mass aggregates with elongation factor 1.

It catalyses the reaction tRNA(Val) + L-valine + ATP = L-valyl-tRNA(Val) + AMP + diphosphate. With respect to regulation, can be regulated by protein kinase C-dependent phosphorylation. Catalyzes the attachment of valine to tRNA(Val). In Homo sapiens (Human), this protein is Valine--tRNA ligase.